Reading from the N-terminus, the 336-residue chain is 3-isopropylmalate dehydrogenase (336 aa).

Arginine 87, arginine 97, arginine 121, and aspartate 211 together coordinate substrate. Mg(2+) contacts are provided by aspartate 211, aspartate 235, and aspartate 239. 271 to 283 (GSAPDIAGQGIAD) contributes to the NAD(+) binding site.

The protein belongs to the isocitrate and isopropylmalate dehydrogenases family. LeuB type 2 subfamily. In terms of assembly, homodimer. Mg(2+) serves as cofactor. The cofactor is Mn(2+).

The protein resides in the cytoplasm. It carries out the reaction (2R,3S)-3-isopropylmalate + NAD(+) = 4-methyl-2-oxopentanoate + CO2 + NADH. Its pathway is amino-acid biosynthesis; L-leucine biosynthesis; L-leucine from 3-methyl-2-oxobutanoate: step 3/4. Functionally, catalyzes the oxidation of 3-carboxy-2-hydroxy-4-methylpentanoate (3-isopropylmalate) to 3-carboxy-4-methyl-2-oxopentanoate. The product decarboxylates to 4-methyl-2 oxopentanoate. The polypeptide is 3-isopropylmalate dehydrogenase (Mycolicibacterium vanbaalenii (strain DSM 7251 / JCM 13017 / BCRC 16820 / KCTC 9966 / NRRL B-24157 / PYR-1) (Mycobacterium vanbaalenii)).